A 369-amino-acid polypeptide reads, in one-letter code: Choline-phosphate cytidylyltransferase B (369 aa).

A disordered region spans residues 1 to 27 (MPVVTTDAESETGIPKSLSNEPPSETM). CTP is bound by residues Ile84, Phe85, His92, and Lys122. The phosphocholine site is built by Lys122 and Trp151. The CTP site is built by His168, Asp169, Tyr173, Gln195, Arg196, Thr197, and Ile200. Residues 309-369 (RMLQALSPKQ…SMSEGDEDEK (61 aa)) are disordered. Residues Ser315, Ser319, Ser322, Ser323, Ser329, Ser331, and Ser335 each carry the phosphoserine modification. Over residues 319-339 (SPVSSPTRSRSPSRSPSPTFS) the composition is skewed to low complexity. Position 345 is a phosphothreonine (Thr345). 6 positions are modified to phosphoserine: Ser346, Ser349, Ser350, Ser355, Ser360, and Ser362. Positions 351 to 362 (PKAASASISSMS) are enriched in low complexity.

It belongs to the cytidylyltransferase family. As to quaternary structure, homodimer. Phosphorylated. Post-translationally, extensively phosphorylated. As to expression, highly expressed in testis, placenta, brain, ovary, liver and fetal lung. Expressed in brain, liver and fetal lung.

The protein resides in the cytoplasm. It localises to the endoplasmic reticulum. The catalysed reaction is phosphocholine + CTP + H(+) = CDP-choline + diphosphate. It functions in the pathway phospholipid metabolism; phosphatidylcholine biosynthesis; phosphatidylcholine from phosphocholine: step 1/2. Catalyzes the key rate-limiting step in the CDP-choline pathway for phosphatidylcholine biosynthesis. The protein is Choline-phosphate cytidylyltransferase B (PCYT1B) of Homo sapiens (Human).